Consider the following 219-residue polypeptide: N-(5'-phosphoribosyl)anthranilate isomerase (219 aa).

It belongs to the TrpF family.

The enzyme catalyses N-(5-phospho-beta-D-ribosyl)anthranilate = 1-(2-carboxyphenylamino)-1-deoxy-D-ribulose 5-phosphate. The protein operates within amino-acid biosynthesis; L-tryptophan biosynthesis; L-tryptophan from chorismate: step 3/5. The chain is N-(5'-phosphoribosyl)anthranilate isomerase from Dehalococcoides mccartyi (strain ATCC BAA-2266 / KCTC 15142 / 195) (Dehalococcoides ethenogenes (strain 195)).